The following is a 131-amino-acid chain: Small ribosomal subunit protein uS8 (131 aa).

The protein belongs to the universal ribosomal protein uS8 family. In terms of assembly, part of the 30S ribosomal subunit. Contacts proteins S5 and S12.

Its function is as follows. One of the primary rRNA binding proteins, it binds directly to 16S rRNA central domain where it helps coordinate assembly of the platform of the 30S subunit. This chain is Small ribosomal subunit protein uS8, found in Dictyoglomus thermophilum (strain ATCC 35947 / DSM 3960 / H-6-12).